The chain runs to 847 residues: Leucine--tRNA ligase (847 aa).

The short motif at 41-51 (PYPSGRIHMGH) is the 'HIGH' region element. The short motif at 619-623 (KMSKS) is the 'KMSKS' region element. Lysine 622 is an ATP binding site.

Belongs to the class-I aminoacyl-tRNA synthetase family.

The protein resides in the cytoplasm. It carries out the reaction tRNA(Leu) + L-leucine + ATP = L-leucyl-tRNA(Leu) + AMP + diphosphate. This Cereibacter sphaeroides (strain ATCC 17023 / DSM 158 / JCM 6121 / CCUG 31486 / LMG 2827 / NBRC 12203 / NCIMB 8253 / ATH 2.4.1.) (Rhodobacter sphaeroides) protein is Leucine--tRNA ligase.